We begin with the raw amino-acid sequence, 156 residues long: Ribosomal RNA large subunit methyltransferase H (156 aa).

Residues leucine 73, glycine 104, and leucine 123–leucine 128 each bind S-adenosyl-L-methionine.

It belongs to the RNA methyltransferase RlmH family. Homodimer.

The protein resides in the cytoplasm. It catalyses the reaction pseudouridine(1915) in 23S rRNA + S-adenosyl-L-methionine = N(3)-methylpseudouridine(1915) in 23S rRNA + S-adenosyl-L-homocysteine + H(+). Functionally, specifically methylates the pseudouridine at position 1915 (m3Psi1915) in 23S rRNA. The protein is Ribosomal RNA large subunit methyltransferase H of Shewanella woodyi (strain ATCC 51908 / MS32).